Reading from the N-terminus, the 232-residue chain is PsbP domain-containing protein 2, chloroplastic (232 aa).

A chloroplast-targeting transit peptide spans 1–34 (MWSQSFLGSAPKLCLFSSSLPPFSHHKIHKFFCF). Residues 35 to 71 (AQNPSSTVSINLSKRHLNLSILTLFFNGFLLDNKAKS) constitute a thylakoid transit peptide.

This sequence belongs to the PsbP family.

Its subcellular location is the plastid. It localises to the chloroplast thylakoid lumen. The protein is PsbP domain-containing protein 2, chloroplastic (PPD2) of Arabidopsis thaliana (Mouse-ear cress).